A 430-amino-acid chain; its full sequence is Delta(14)-sterol reductase (430 aa).

6 helical membrane passes run 12–32 (IGTG…HFLI), 67–87 (LAVA…PAEI), 109–129 (FLVF…TWWF), 230–250 (FVSD…VDAL), 267–287 (LGVM…CLQA), and 290–310 (LASF…AVQF). NADP(+)-binding positions include K323, R327, L350, W355, and 362–363 (NY). Transmembrane regions (helical) follow at residues 349 to 369 (LLIS…DWIM) and 376 to 396 (TTGF…ILLL). Residues D402, 406–410 (CREKY), and Y417 each bind NADP(+).

Belongs to the ERG4/ERG24 family.

It localises to the membrane. The catalysed reaction is 4,4-dimethyl-5alpha-cholesta-8,24-dien-3beta-ol + NADP(+) = 4,4-dimethyl-5alpha-cholesta-8,14,24-trien-3beta-ol + NADPH + H(+). The protein operates within steroid biosynthesis; zymosterol biosynthesis; zymosterol from lanosterol: step 2/6. Its function is as follows. Reduces the C14=C15 double bond of 4,4-dimethyl-cholesta-8,14,24-trienol to produce 4,4-dimethyl-cholesta-8,24-dienol. This Ascobolus immersus protein is Delta(14)-sterol reductase (ERG3).